A 1912-amino-acid chain; its full sequence is Receptor-type tyrosine-protein phosphatase delta (1912 aa).

The signal sequence occupies residues 1–20 (MVPVARPLSLLLTFFLCACA). Over 21–1266 (ETPPRFTRTP…PQPITDEEEG (1246 aa)) the chain is Extracellular. Ig-like C2-type domains are found at residues 24–114 (PRFT…TRLT) and 126–224 (PTID…ANLY). 2 disulfides stabilise this stretch: Cys45/Cys98 and Cys147/Cys207. A mini-exon peptide A9; sufficient for interaction with IL1RAPL1 region spans residues 181 to 189 (ESIGGTPIR). The tract at residues 227-230 (ELRE) is mini-exon peptide B; required for interaction with SLITRK2 and in the function in pre-synaptic differentiation; Acts as an adjustable linker to control relative positions and orientations of the PTPRD second and third immunoglobilin domains for their simultaneous interactions with the first immunoglobilin domain of IL1RAPL1 and IL1RAP; Modulates affinity for IL1RAPL1 and IL1RAP. One can recognise an Ig-like C2-type 3 domain in the interval 236 to 318 (PRFSIPPTNH…GVIEAIAQIT (83 aa)). N-linked (GlcNAc...) asparagine glycans are attached at residues Asn254 and Asn299. Cys257 and Cys302 are disulfide-bonded. 8 consecutive Fibronectin type-III domains span residues 325 to 415 (PPGT…TSEQ), 420 to 516 (APRD…TGVP), 518 to 607 (QPLN…TMQS), 612 to 709 (PPQD…TDED), 714 to 822 (PPRK…TTGA), 823 to 916 (VPGK…VPEE), 921 to 1016 (FPQN…TLPV), and 1020 to 1106 (FAKN…TAPD). Asn724 and Asn832 each carry an N-linked (GlcNAc...) asparagine glycan. A helical membrane pass occupies residues 1267–1287 (LIWVVGPVLAVVFIICIVIAI). Topologically, residues 1288–1912 (LLYKRKRAES…YLGSFDHYAT (625 aa)) are cytoplasmic. The tract at residues 1298 to 1319 (ESRKSSLPNSKEVPSHHPTDPV) is disordered. Positions 1310 to 1319 (VPSHHPTDPV) are enriched in basic and acidic residues. Tyrosine-protein phosphatase domains lie at 1357 to 1612 (FSQE…LLEA) and 1644 to 1903 (MELE…ALEY). Residues Asp1521, 1553 to 1559 (CSAGVGR), and Gln1597 contribute to the substrate site. Catalysis depends on Cys1553, which acts as the Phosphocysteine intermediate. Cys1844 acts as the Phosphocysteine intermediate in catalysis.

It belongs to the protein-tyrosine phosphatase family. Receptor class 2A subfamily. As to quaternary structure, interacts with PPFIA1, PPFIA2 and PPFIA3. Interacts (via extracellular domain) with SLITRK4 (via LRR 1 and 2 repeats). Interacts with SLITRK2; induces presynaptic differentiation. Interacts (via the second immunoglobilin domain) with IL1RAPL1 (via the first immunoglobilin domain); induces pre- and postsynaptic differentiation of neurons and synapse formation. Isoform G, isoform H, isoform I, isoform J, and isoform K do not interact with IL1RAPL1. Interacts (via the third immunoglobilin domain) with IL1RAP (via the first immunoglobilin domain); induces pre- and postsynaptic differentiation of neurons. In terms of processing, a cleavage occurs, separating the extracellular domain from the transmembrane segment. This process called 'ectodomain shedding' is thought to be involved in receptor desensitization, signal transduction and/or membrane localization. Brain, kidney, heart, and some B-cell lines.

The protein localises to the membrane. The catalysed reaction is O-phospho-L-tyrosyl-[protein] + H2O = L-tyrosyl-[protein] + phosphate. Its function is as follows. Can bidirectionally induce pre- and post-synaptic differentiation of neurons by mediating interaction with IL1RAP and IL1RAPL1 trans-synaptically. Involved in pre-synaptic differentiation through interaction with SLITRK2. The polypeptide is Receptor-type tyrosine-protein phosphatase delta (Ptprd) (Mus musculus (Mouse)).